Reading from the N-terminus, the 229-residue chain is Aquaporin Z (229 aa).

Helical transmembrane passes span 8 to 28 (FLGT…AAGF) and 33 to 53 (IGFA…AYAI). The NPA 1 motif lies at 62 to 64 (NPA). A run of 3 helical transmembrane segments spans residues 88–108 (VLGA…GAGF), 129–149 (LLAA…VIMG), and 158–178 (GFAP…SIPV). Residues 184-186 (NPA) carry the NPA 2 motif. A helical membrane pass occupies residues 192–212 (ALFVGGWAVQQLWLFWLAPII).

Belongs to the MIP/aquaporin (TC 1.A.8) family. In terms of assembly, homotetramer.

Its subcellular location is the cell inner membrane. The catalysed reaction is H2O(in) = H2O(out). Functionally, channel that permits osmotically driven movement of water in both directions. It is involved in the osmoregulation and in the maintenance of cell turgor during volume expansion in rapidly growing cells. It mediates rapid entry or exit of water in response to abrupt changes in osmolarity. This is Aquaporin Z from Chromobacterium violaceum (strain ATCC 12472 / DSM 30191 / JCM 1249 / CCUG 213 / NBRC 12614 / NCIMB 9131 / NCTC 9757 / MK).